The primary structure comprises 620 residues: Translation initiation factor IF-2 (620 aa).

The tr-type G domain occupies 119-288; the sequence is ERPPIVTIMG…IILISELENL (170 aa). The interval 128-135 is G1; sequence GHVDHGKT. A GTP-binding site is contributed by 128–135; it reads GHVDHGKT. The segment at 153–157 is G2; it reads GITQA. The segment at 175–178 is G3; that stretch reads DTPG. GTP contacts are provided by residues 175–179 and 229–232; these read DTPGH and NKID. The interval 229 to 232 is G4; sequence NKID. The interval 265–267 is G5; that stretch reads SAI.

Belongs to the TRAFAC class translation factor GTPase superfamily. Classic translation factor GTPase family. IF-2 subfamily.

It localises to the cytoplasm. Functionally, one of the essential components for the initiation of protein synthesis. Protects formylmethionyl-tRNA from spontaneous hydrolysis and promotes its binding to the 30S ribosomal subunits. Also involved in the hydrolysis of GTP during the formation of the 70S ribosomal complex. In Mycoplasma mycoides subsp. mycoides SC (strain CCUG 32753 / NCTC 10114 / PG1), this protein is Translation initiation factor IF-2.